We begin with the raw amino-acid sequence, 205 residues long: Lymphotoxin-alpha (205 aa).

The signal sequence occupies residues 1–34 (MTPPERLFLPRVRGTTLHLLLLGLLLVLLPGAQG). Thr41 is a glycosylation site (O-linked (GalNAc...) threonine). The THD domain maps to 63-205 (PAAHLIGDPS…STVFFGAFAL (143 aa)). Asn96 carries an N-linked (GlcNAc...) asparagine glycan.

Belongs to the tumor necrosis factor family. Homotrimer, and heterotrimer of either two LTB and one LTA subunits or (less prevalent) two LTA and one LTB subunits. Interacts with TNFRSF14.

The protein resides in the secreted. The protein localises to the membrane. Cytokine that in its homotrimeric form binds to TNFRSF1A/TNFR1, TNFRSF1B/TNFBR and TNFRSF14/HVEM. In its heterotrimeric form with LTB binds to TNFRSF3/LTBR. Lymphotoxin is produced by lymphocytes and is cytotoxic for a wide range of tumor cells in vitro and in vivo. In Pan troglodytes (Chimpanzee), this protein is Lymphotoxin-alpha (LTA).